Here is a 321-residue protein sequence, read N- to C-terminus: MTKYALVGDVGGTNARLALCDIASGEISQAKTYSGLDYPSLEAVVRVYLDEHSVSVEDGCIAIACPITGDWVAMTNHTWAFSIAEMKKNLGFSHLEIINDFTAVSMAIPMLKKEHLIQFGGGEPVDGKPIAVYGAGTGLGVAHLVHVDKRWISLPGEGGHVDFAPNSEEEAMILEILRAEIGHVSAERVLSGPGLVNLYRAIVKSDNRLPENLRPKDITERALADSCIDCRRALSLFCVIMGRFGGDLALTMGTFGGVYIAGGIVPRFLEFFKASGFRGGFEDKGRFKDYVHGIPVYLIVHDNPGLLGSGAHLRQTLGHIL.

8–13 (GDVGGT) provides a ligand contact to ATP.

The protein belongs to the bacterial glucokinase family.

Its subcellular location is the cytoplasm. The enzyme catalyses D-glucose + ATP = D-glucose 6-phosphate + ADP + H(+). The polypeptide is Glucokinase (Salmonella agona (strain SL483)).